The primary structure comprises 419 residues: D-inositol 3-phosphate glycosyltransferase (419 aa).

His9 lines the 1D-myo-inositol 3-phosphate pocket. UDP-N-acetyl-alpha-D-glucosamine-binding positions include 15-16 (QP) and Gly23. Residues 20–25 (DAGGMN), Lys78, Tyr110, Thr134, and Arg154 contribute to the 1D-myo-inositol 3-phosphate site. Residues Arg231, Lys236, and Arg295 each contribute to the UDP-N-acetyl-alpha-D-glucosamine site. Mg(2+)-binding residues include Tyr304, Arg305, and Ala307. Residues Glu317 and Glu325 each contribute to the UDP-N-acetyl-alpha-D-glucosamine site. Thr331 contributes to the Mg(2+) binding site.

It belongs to the glycosyltransferase group 1 family. MshA subfamily. In terms of assembly, homodimer.

It catalyses the reaction 1D-myo-inositol 3-phosphate + UDP-N-acetyl-alpha-D-glucosamine = 1D-myo-inositol 2-acetamido-2-deoxy-alpha-D-glucopyranoside 3-phosphate + UDP + H(+). In terms of biological role, catalyzes the transfer of a N-acetyl-glucosamine moiety to 1D-myo-inositol 3-phosphate to produce 1D-myo-inositol 2-acetamido-2-deoxy-glucopyranoside 3-phosphate in the mycothiol biosynthesis pathway. The polypeptide is D-inositol 3-phosphate glycosyltransferase (Corynebacterium jeikeium (strain K411)).